Reading from the N-terminus, the 783-residue chain is BMP/retinoic acid-inducible neural-specific protein 2 (783 aa).

The N-terminal stretch at 1–33 is a signal peptide; sequence MRWPCSSRFRGLWPEAAPWAVLLALGVPGWVLA. The 197-residue stretch at 85–281 folds into the MACPF domain; the sequence is RYRIYREFAR…FVAAALSYIT (197 aa). N-linked (GlcNAc...) asparagine glycosylation is found at N185, N354, N473, N579, N626, and N658.

This sequence belongs to the BRINP family. In terms of tissue distribution, expressed in olfactory bulb, cerebellum and neuronal layers in hippocampus.

It is found in the secreted. In terms of biological role, inhibits neuronal cell proliferation by negative regulation of the cell cycle transition. In Rattus norvegicus (Rat), this protein is BMP/retinoic acid-inducible neural-specific protein 2 (Brinp2).